Reading from the N-terminus, the 274-residue chain is Membrane protein insertase YidC 2 (274 aa).

An N-terminal signal peptide occupies residues 1-20; that stretch reads MKKKLKLTSLLGLSLLIMTA. The N-palmitoyl cysteine moiety is linked to residue C21. The S-diacylglycerol cysteine moiety is linked to residue C21. 4 consecutive transmembrane segments (helical) span residues 56–76, 128–148, 167–187, and 205–225; these read ISIGVGIILFTVLIRTVLLPV, SDSLWPILIQMPVILALFQAL, VDTTLVLPILAAVFTFLSTWL, and GIPVLIFIFAVYAPGGVALYW.

The protein belongs to the OXA1/ALB3/YidC family. Type 2 subfamily.

Its subcellular location is the cell membrane. Its function is as follows. Required for the insertion and/or proper folding and/or complex formation of integral membrane proteins into the membrane. Involved in integration of membrane proteins that insert both dependently and independently of the Sec translocase complex, as well as at least some lipoproteins. This Streptococcus pneumoniae serotype 4 (strain ATCC BAA-334 / TIGR4) protein is Membrane protein insertase YidC 2.